The sequence spans 230 residues: uncharacterized protein (230 aa).

Active-site charge relay system residues include Ser124 and His158.

The protein belongs to the peptidase S51 family.

This is an uncharacterized protein from Bacillus subtilis (strain 168).